The primary structure comprises 827 residues: Villin-1 (827 aa).

The tract at residues 1-126 (MTKLNAQVKG…IRKGGVASGM (126 aa)) is necessary for homodimerization. Residues 1–734 (MTKLNAQVKG…YEDLKAELGN (734 aa)) form a core region. Residues 28 to 107 (QMVPVSSSTY…EVQGNESEAF (80 aa)) form a Gelsolin-like 1 repeat. LPA/PIP2-binding site stretches follow at residues 112–119 (KQGIVIRK) and 138–146 (RLLHVKGKR). Gelsolin-like repeat units lie at residues 148 to 216 (VVAG…GEDE) and 269 to 342 (EVAT…SAVF). Ser-366 is subject to Phosphoserine. Gelsolin-like repeat units follow at residues 409–489 (DLVP…PHLM), 528–595 (TKAF…ANFW), and 634–707 (TEIP…PPTF). The residue at position 735 (Ser-735) is a Phosphoserine. Residues 761-827 (SGPLPIFPLE…QNLKKEKGLF (67 aa)) enclose the HP domain. Residues 816 to 824 (KQQNLKKEK) form an LPA/PIP2-binding site 3 region.

Belongs to the villin/gelsolin family. As to quaternary structure, monomer. Homodimer; homodimerization is necessary for actin-bundling. Associates with F-actin; phosphorylation at tyrosine residues decreases the association with F-actin. Interacts (phosphorylated at C-terminus tyrosine phosphorylation sites) with PLCG1 (via the SH2 domains). Interacts (phosphorylated form) with PLCG1; the interaction is enhanced by hepatocyte growth factor (HGF). Post-translationally, phosphorylated on tyrosine residues by SRC. The unphosphorylated form increases the initial rate of actin-nucleating activity, whereas the tyrosine-phosphorylated form inhibits actin-nucleating activity, enhances actin-bundling activity and enhances actin-severing activity by reducing high Ca(2+) requirements. The tyrosine-phosphorylated form does not regulate actin-capping activity. Tyrosine phosphorylation is essential for cell migration: tyrosine phosphorylation sites in the N-terminus half regulate actin reorganization and cell morphology, whereas tyrosine phosphorylation sites in the C-terminus half regulate cell migration. Tyrosine phosphorylation is induced by epidermal growth factor (EGF) and stimulates cell migration.

The protein resides in the cytoplasm. The protein localises to the cytoskeleton. It localises to the cell projection. Its subcellular location is the lamellipodium. It is found in the ruffle. The protein resides in the microvillus. The protein localises to the filopodium tip. It localises to the filopodium. Its function is as follows. Epithelial cell-specific Ca(2+)-regulated actin-modifying protein that modulates the reorganization of microvillar actin filaments. Plays a role in the actin nucleation, actin filament bundle assembly, actin filament capping and severing. Binds phosphatidylinositol 4,5-bisphosphate (PIP2) and lysophosphatidic acid (LPA); binds LPA with higher affinity than PIP2. Binding to LPA increases its phosphorylation by SRC and inhibits all actin-modifying activities. Binding to PIP2 inhibits actin-capping and -severing activities but enhances actin-bundling activity. Regulates the intestinal epithelial cell morphology, cell invasion, cell migration and apoptosis. Protects against apoptosis induced by dextran sodium sulfate (DSS) in the gastrointestinal epithelium. Appears to regulate cell death by maintaining mitochondrial integrity. Enhances hepatocyte growth factor (HGF)-induced epithelial cell motility, chemotaxis and wound repair. The protein is Villin-1 (VIL1) of Sus scrofa (Pig).